Consider the following 130-residue polypeptide: Lipoprotein LpqS (130 aa).

Residues 1-23 (MVWMRSAIVAVALGVTVAAVAAA) form the signal peptide. The N-palmitoyl cysteine moiety is linked to residue Cys-24. Cys-24 carries the S-diacylglycerol cysteine lipid modification.

The protein localises to the cell membrane. May play an essential role in M.tuberculosis replication and survival inside the host cell. The polypeptide is Lipoprotein LpqS (Mycobacterium tuberculosis (strain ATCC 25618 / H37Rv)).